Reading from the N-terminus, the 482-residue chain is MKFIVKPHPEIFVKSESVRKRFTKILECNIRNIVKSRTESVAVFNRRDHIEVTSESDEFHAEVLEILTHTPGIRHVLEVKQTEFKDLHDIYEQVLELSGSLIEGKTFAVRAKRRGKHDFTSIELERYVGGGLNQAVESARVKLSKPDVTINVEVTNDRLNQVLASHKGLGGFPLGTQEDVLSLISGGFDSGVSSYLHIKRGSKVHYCFFNLGGPAHEIGVKQVSHYLWNKYGSSAKVRFISVDFEPVVAEILEKVDDGQMGVILKRMFMRAAGMIAQKMKIEALVTGEALGQVSSQTLTNLRHIDNVTDTLILRPLINWDKEDIVNLAREIGTEDFAKTMPEYCGVISKKPTVKAVKGKLEAEEQKFDFSILEQVVQDARMTDIRDIAKESKQAAPEVEQVQAVEEHAIVLDIRSPEEEDDNSLEIDGVEVKHIPFYKLGTQFGDLDQAKTYLLYCDRGVMSRLQALYLQEQGFNNVKVYRP.

One can recognise a THUMP domain in the interval 61–165 (AEVLEILTHT…NDRLNQVLAS (105 aa)). ATP contacts are provided by residues 183 to 184 (LI), K265, G287, and Q296. C344 and C456 are joined by a disulfide. In terms of domain architecture, Rhodanese spans 404-482 (VEEHAIVLDI…GFNNVKVYRP (79 aa)). Residue C456 is the Cysteine persulfide intermediate of the active site.

The protein belongs to the ThiI family.

It localises to the cytoplasm. It carries out the reaction [ThiI sulfur-carrier protein]-S-sulfanyl-L-cysteine + a uridine in tRNA + 2 reduced [2Fe-2S]-[ferredoxin] + ATP + H(+) = [ThiI sulfur-carrier protein]-L-cysteine + a 4-thiouridine in tRNA + 2 oxidized [2Fe-2S]-[ferredoxin] + AMP + diphosphate. It catalyses the reaction [ThiS sulfur-carrier protein]-C-terminal Gly-Gly-AMP + S-sulfanyl-L-cysteinyl-[cysteine desulfurase] + AH2 = [ThiS sulfur-carrier protein]-C-terminal-Gly-aminoethanethioate + L-cysteinyl-[cysteine desulfurase] + A + AMP + 2 H(+). It functions in the pathway cofactor biosynthesis; thiamine diphosphate biosynthesis. In terms of biological role, catalyzes the ATP-dependent transfer of a sulfur to tRNA to produce 4-thiouridine in position 8 of tRNAs, which functions as a near-UV photosensor. Also catalyzes the transfer of sulfur to the sulfur carrier protein ThiS, forming ThiS-thiocarboxylate. This is a step in the synthesis of thiazole, in the thiamine biosynthesis pathway. The sulfur is donated as persulfide by IscS. This is tRNA sulfurtransferase from Vibrio campbellii (strain ATCC BAA-1116).